Here is a 503-residue protein sequence, read N- to C-terminus: Aspartyl/glutamyl-tRNA(Asn/Gln) amidotransferase subunit B (503 aa).

Belongs to the GatB/GatE family. GatB subfamily. As to quaternary structure, heterotrimer of A, B and C subunits.

The enzyme catalyses L-glutamyl-tRNA(Gln) + L-glutamine + ATP + H2O = L-glutaminyl-tRNA(Gln) + L-glutamate + ADP + phosphate + H(+). The catalysed reaction is L-aspartyl-tRNA(Asn) + L-glutamine + ATP + H2O = L-asparaginyl-tRNA(Asn) + L-glutamate + ADP + phosphate + 2 H(+). Functionally, allows the formation of correctly charged Asn-tRNA(Asn) or Gln-tRNA(Gln) through the transamidation of misacylated Asp-tRNA(Asn) or Glu-tRNA(Gln) in organisms which lack either or both of asparaginyl-tRNA or glutaminyl-tRNA synthetases. The reaction takes place in the presence of glutamine and ATP through an activated phospho-Asp-tRNA(Asn) or phospho-Glu-tRNA(Gln). The protein is Aspartyl/glutamyl-tRNA(Asn/Gln) amidotransferase subunit B of Nocardia farcinica (strain IFM 10152).